A 446-amino-acid chain; its full sequence is tRNA wybutosine-synthesizing protein 2 homolog (446 aa).

S-adenosyl-L-methionine contacts are provided by residues serine 208, lysine 215, glutamate 255, and 283 to 284; that span reads DN.

This sequence belongs to the class I-like SAM-binding methyltransferase superfamily. TRM5/TYW2 family.

It carries out the reaction 4-demethylwyosine(37) in tRNA(Phe) + S-adenosyl-L-methionine = 4-demethyl-7-[(3S)-3-amino-3-carboxypropyl]wyosine(37) in tRNA(Phe) + S-methyl-5'-thioadenosine + H(+). It participates in tRNA modification; wybutosine-tRNA(Phe) biosynthesis. In terms of biological role, S-adenosyl-L-methionine-dependent transferase that acts as a component of the wybutosine biosynthesis pathway. Wybutosine is a hyper modified guanosine with a tricyclic base found at the 3'-position adjacent to the anticodon of eukaryotic phenylalanine tRNA. Catalyzes the transfer of the alpha-amino-alpha-carboxypropyl (acp) group from S-adenosyl-L-methionine to the C-7 position of 4-demethylwyosine (imG-14) to produce wybutosine-86. The protein is tRNA wybutosine-synthesizing protein 2 homolog (Trmt12) of Mus musculus (Mouse).